The primary structure comprises 332 residues: Glycerol-3-phosphate dehydrogenase [NAD(P)+] (332 aa).

NADPH-binding residues include Trp11, Arg30, and Lys108. Sn-glycerol 3-phosphate-binding residues include Lys108, Gly137, and Ser139. Ala141 serves as a coordination point for NADPH. Lys192, Asp245, Ser255, Arg256, and Asn257 together coordinate sn-glycerol 3-phosphate. Residue Lys192 is the Proton acceptor of the active site. Arg256 serves as a coordination point for NADPH. Residues Val280 and Glu282 each coordinate NADPH.

The protein belongs to the NAD-dependent glycerol-3-phosphate dehydrogenase family.

The protein resides in the cytoplasm. The enzyme catalyses sn-glycerol 3-phosphate + NAD(+) = dihydroxyacetone phosphate + NADH + H(+). The catalysed reaction is sn-glycerol 3-phosphate + NADP(+) = dihydroxyacetone phosphate + NADPH + H(+). Its pathway is membrane lipid metabolism; glycerophospholipid metabolism. Catalyzes the reduction of the glycolytic intermediate dihydroxyacetone phosphate (DHAP) to sn-glycerol 3-phosphate (G3P), the key precursor for phospholipid synthesis. The polypeptide is Glycerol-3-phosphate dehydrogenase [NAD(P)+] (Burkholderia cenocepacia (strain HI2424)).